The sequence spans 390 residues: uncharacterized protein (390 aa).

Helical transmembrane passes span 10–30 (LSFC…LPIL), 43–63 (FLIG…QIPF), 81–101 (FMFF…GLII), 134–154 (AIGV…PIIV), 162–182 (IFWI…FFVP), 213–233 (FYLG…MIPN), 246–266 (WKVY…FIFY), 272–292 (ILEN…IIFL), 298–318 (LLFL…LEVF), 341–361 (TSQF…YSFL), and 363–383 (FSQI…FSFF).

The protein belongs to the major facilitator superfamily.

Its subcellular location is the cell membrane. This is an uncharacterized protein from Buchnera aphidicola subsp. Acyrthosiphon pisum (strain APS) (Acyrthosiphon pisum symbiotic bacterium).